Consider the following 214-residue polypeptide: Imidazole glycerol phosphate synthase subunit HisH (214 aa).

The Glutamine amidotransferase type-1 domain occupies R2–P214. C88 (nucleophile) is an active-site residue. Catalysis depends on residues H194 and E196.

Heterodimer of HisH and HisF.

The protein resides in the cytoplasm. The catalysed reaction is 5-[(5-phospho-1-deoxy-D-ribulos-1-ylimino)methylamino]-1-(5-phospho-beta-D-ribosyl)imidazole-4-carboxamide + L-glutamine = D-erythro-1-(imidazol-4-yl)glycerol 3-phosphate + 5-amino-1-(5-phospho-beta-D-ribosyl)imidazole-4-carboxamide + L-glutamate + H(+). It carries out the reaction L-glutamine + H2O = L-glutamate + NH4(+). It participates in amino-acid biosynthesis; L-histidine biosynthesis; L-histidine from 5-phospho-alpha-D-ribose 1-diphosphate: step 5/9. Its function is as follows. IGPS catalyzes the conversion of PRFAR and glutamine to IGP, AICAR and glutamate. The HisH subunit catalyzes the hydrolysis of glutamine to glutamate and ammonia as part of the synthesis of IGP and AICAR. The resulting ammonia molecule is channeled to the active site of HisF. The chain is Imidazole glycerol phosphate synthase subunit HisH from Rhodospirillum rubrum (strain ATCC 11170 / ATH 1.1.1 / DSM 467 / LMG 4362 / NCIMB 8255 / S1).